A 223-amino-acid chain; its full sequence is Uracil-DNA glycosylase (223 aa).

The Proton acceptor role is filled by aspartate 66.

Belongs to the uracil-DNA glycosylase (UDG) superfamily. UNG family.

Its subcellular location is the cytoplasm. The enzyme catalyses Hydrolyzes single-stranded DNA or mismatched double-stranded DNA and polynucleotides, releasing free uracil.. Excises uracil residues from the DNA which can arise as a result of misincorporation of dUMP residues by DNA polymerase or due to deamination of cytosine. The chain is Uracil-DNA glycosylase from Sulfurimonas denitrificans (strain ATCC 33889 / DSM 1251) (Thiomicrospira denitrificans (strain ATCC 33889 / DSM 1251)).